The following is a 140-amino-acid chain: Cytochrome B5 isoform D (140 aa).

One can recognise a Cytochrome b5 heme-binding domain in the interval 5 to 81 (GKVFTLSEVS…LDEYYVGDID (77 aa)). His40 and His64 together coordinate heme. The helical transmembrane segment at 109-129 (FVIKLLQFLVPLLILGLAFGI) threads the bilayer.

The protein belongs to the cytochrome b5 family. In terms of assembly, interacts with CER1, BI-1, FAH1 and FAH2. Expressed in roots, stems, leaves, flowers and siliques.

It localises to the endoplasmic reticulum membrane. Its function is as follows. Membrane bound hemoprotein which function as an electron carrier for several membrane bound oxygenases, including fatty acid desaturases. This Arabidopsis thaliana (Mouse-ear cress) protein is Cytochrome B5 isoform D.